The chain runs to 281 residues: MGKGDWRQGRVEMPCAHVSRLHKTCVQVRVRVTMASSEEDGTNGASEASDEKEAAGKRRRLGLLATAWLTFYNIAMTAGWLVLAIAMVRFYMEKGTHRGLYKSIQKTLKFFQTFALLEVVHCLIGIVPTSVLVTGVQVSSRIFMVWLITHSIKPIQNEESVVLFLVSWTVTEITRYSFYTFSLLDHLPHFIKWARYNLFIILYPVGVAGELLTIYAALPYVKKSGMFSVRLPNKYNVSFDYYYFLLITMASYIPLFPQLYFHMLRQRRKVLHGEVIAEKDD.

Topologically, residues 1–68 (MGKGDWRQGR…RRLGLLATAW (68 aa)) are cytoplasmic. Residues 69–88 (LTFYNIAMTAGWLVLAIAMV) traverse the membrane as a helical segment. Topologically, residues 89–107 (RFYMEKGTHRGLYKSIQKT) are lumenal. A helical membrane pass occupies residues 108–124 (LKFFQTFALLEVVHCLI). The Cytoplasmic portion of the chain corresponds to 125–134 (GIVPTSVLVT). A helical transmembrane segment spans residues 135–152 (GVQVSSRIFMVWLITHSI). Over 153–158 (KPIQNE) the chain is Lumenal. A helical membrane pass occupies residues 159-173 (ESVVLFLVSWTVTEI). Over 174 to 196 (TRYSFYTFSLLDHLPHFIKWARY) the chain is Cytoplasmic. The chain crosses the membrane as a helical span at residues 197–214 (NLFIILYPVGVAGELLTI). Residues Tyr-203 and Glu-210 contribute to the active site. Residues 215-244 (YAALPYVKKSGMFSVRLPNKYNVSFDYYYF) lie on the Lumenal side of the membrane. An N-linked (GlcNAc...) asparagine glycan is attached at Asn-236. A helical membrane pass occupies residues 245 to 262 (LLITMASYIPLFPQLYFH). Topologically, residues 263–281 (MLRQRRKVLHGEVIAEKDD) are cytoplasmic.

Belongs to the very long-chain fatty acids dehydratase HACD family. May interact with enzymes of the ELO family (including ELOVL1); with those enzymes that mediate condensation, the first of the four steps of the reaction cycle responsible for fatty acids elongation, may be part of a larger fatty acids elongase complex. Interacts with TECR. In terms of processing, N-glycosylated. As to expression, expressed at high levels in heart, skeletal muscle and testis, weak expression in kidney and liver.

The protein localises to the endoplasmic reticulum membrane. The catalysed reaction is a very-long-chain (3R)-3-hydroxyacyl-CoA = a very-long-chain (2E)-enoyl-CoA + H2O. It carries out the reaction (3R)-hydroxyhexadecanoyl-CoA = (2E)-hexadecenoyl-CoA + H2O. The enzyme catalyses (3R)-hydroxyoctadecanoyl-CoA = (2E)-octadecenoyl-CoA + H2O. It catalyses the reaction (3R)-hydroxyeicosanoyl-CoA = (2E)-eicosenoyl-CoA + H2O. The catalysed reaction is (3R)-hydroxydocosanoyl-CoA = (2E)-docosenoyl-CoA + H2O. It carries out the reaction (3R)-hydroxytetracosanoyl-CoA = (2E)-tetracosenoyl-CoA + H2O. The enzyme catalyses (3R)-hydroxyhexacosanoyl-CoA = (2E)-hexacosenoyl-CoA + H2O. Its pathway is lipid metabolism; fatty acid biosynthesis. The protein is Very-long-chain (3R)-3-hydroxyacyl-CoA dehydratase 1 of Mus musculus (Mouse).